We begin with the raw amino-acid sequence, 238 residues long: Lytic polysaccharide monooxygenase NCU01050 (238 aa).

Positions 1–15 (MKVLAPLVLASAASA) are cleaved as a signal peptide. His-16 is a binding site for Cu(2+). Residue Glu-45 participates in O2 binding. 2 disulfide bridges follow: Cys-54/Cys-186 and Cys-156/Cys-238. An N-linked (GlcNAc...) asparagine glycan is attached at Asn-75. His-99 is a Cu(2+) binding site. 2 residues coordinate O2: His-172 and Gln-181. Catalysis depends on His-172, which acts as the Proton donor. Residue Tyr-183 coordinates Cu(2+).

It belongs to the polysaccharide monooxygenase AA9 family. As to quaternary structure, monomer. It depends on Cu(2+) as a cofactor. N-linked glycans containing mannose and N-acetylglucosamine.

The protein resides in the secreted. The catalysed reaction is [(1-&gt;4)-beta-D-glucosyl]n+m + reduced acceptor + O2 = 4-dehydro-beta-D-glucosyl-[(1-&gt;4)-beta-D-glucosyl]n-1 + [(1-&gt;4)-beta-D-glucosyl]m + acceptor + H2O.. Its pathway is glycan metabolism; cellulose degradation. Its activity is regulated as follows. Inhibited by increasing levels of ascorbic acid. Its function is as follows. Catalyzes the oxidative cleavage of glycosidic bonds in cellulosic substrates via a copper-dependent mechanism. In the presence of an exogenous reductant ascorbic acid, degrades phosphoric acid swollen cellulose (PASC) to cello-oligosaccharides and 4-ketoaldoses, the end products oxidized at the non-reducing end. Somewhat active toward tamarind xyloglucan and konjac glucomannan, with improved activity with glucomannan in the presence of PASC. H(2)O(2) is able to substitute for O(2) in reactions with PASC, xyloglucan and glucomannan. Very weak activity on cellopentaose. No activity with birchwood xylan or ivory nut mannan. Disrupts plant cell wall polysaccharide substrates, such as recalcitrant crystalline cellulose. This Neurospora crassa (strain ATCC 24698 / 74-OR23-1A / CBS 708.71 / DSM 1257 / FGSC 987) protein is Lytic polysaccharide monooxygenase NCU01050.